Here is a 576-residue protein sequence, read N- to C-terminus: Probable metalloreductase AIM14 (576 aa).

The next 7 membrane-spanning stretches (helical) occupy residues 21–41 (IKYGYYVLIISLVYLIGLALL), 70–90 (AIHLGILFFAVLVPFYYHYSL), 101–118 (LGRLSYALIPLNLFLTLR), 142–162 (IITVIGLLHGIFFIIKWAIDD), 177–197 (FVGFIISILVLFLLICSIGPM), 204–224 (LFYIVHNLVNVAFILLTPIHS), and 230–250 (FPFLLLNCTLLFIHIINRIVF). The region spanning 101-219 (LGRLSYALIP…NLVNVAFILL (119 aa)) is the Ferric oxidoreductase domain. In terms of domain architecture, FAD-binding FR-type spans 250–388 (FAKSLMILNK…GGSGISFALP (139 aa)). The segment covering 480–505 (ISNFNSENADSNDNTPETSHSPTKEN) has biased composition (polar residues). The disordered stretch occupies residues 480–507 (ISNFNSENADSNDNTPETSHSPTKENGS).

It belongs to the ferric reductase (FRE) family. AIM14 subfamily. Interacts with ribosomes.

The protein localises to the membrane. In terms of biological role, probable cell surface metalloreductase. May be involved in iron or copper homeostasis. The sequence is that of Probable metalloreductase AIM14 (AIM14) from Saccharomyces cerevisiae (strain Lalvin EC1118 / Prise de mousse) (Baker's yeast).